The primary structure comprises 553 residues: CTP synthase (553 aa).

The tract at residues 1-270 (MTKYVFVTGG…DRLICEELRL (270 aa)) is amidoligase domain. Ser-13 serves as a coordination point for CTP. Residue Ser-13 participates in UTP binding. Residues 14–19 (SLGKGI) and Asp-71 contribute to the ATP site. 2 residues coordinate Mg(2+): Asp-71 and Glu-144. Residues 151–153 (DIE), 191–196 (KTKPTQ), and Lys-227 contribute to the CTP site. UTP is bound by residues 191–196 (KTKPTQ) and Lys-227. Residues 295 to 547 (TIGMVGKYVD…VQAALACQQT (253 aa)) form the Glutamine amidotransferase type-1 domain. Gly-356 lines the L-glutamine pocket. Residue Cys-383 is the Nucleophile; for glutamine hydrolysis of the active site. L-glutamine contacts are provided by residues 384 to 387 (LGMQ), Glu-407, and Arg-473. Active-site residues include His-520 and Glu-522.

The protein belongs to the CTP synthase family. In terms of assembly, homotetramer.

It catalyses the reaction UTP + L-glutamine + ATP + H2O = CTP + L-glutamate + ADP + phosphate + 2 H(+). It carries out the reaction L-glutamine + H2O = L-glutamate + NH4(+). The enzyme catalyses UTP + NH4(+) + ATP = CTP + ADP + phosphate + 2 H(+). It participates in pyrimidine metabolism; CTP biosynthesis via de novo pathway; CTP from UDP: step 2/2. Allosterically activated by GTP, when glutamine is the substrate; GTP has no effect on the reaction when ammonia is the substrate. The allosteric effector GTP functions by stabilizing the protein conformation that binds the tetrahedral intermediate(s) formed during glutamine hydrolysis. Inhibited by the product CTP, via allosteric rather than competitive inhibition. Catalyzes the ATP-dependent amination of UTP to CTP with either L-glutamine or ammonia as the source of nitrogen. Regulates intracellular CTP levels through interactions with the four ribonucleotide triphosphates. This Burkholderia mallei (strain NCTC 10247) protein is CTP synthase.